Here is a 207-residue protein sequence, read N- to C-terminus: Large ribosomal subunit protein bL25 (207 aa).

The tract at residues 185–207 is disordered; sequence DLEEETGEAAAEAEAPAEEGAES.

This sequence belongs to the bacterial ribosomal protein bL25 family. CTC subfamily. Part of the 50S ribosomal subunit; part of the 5S rRNA/L5/L18/L25 subcomplex. Contacts the 5S rRNA. Binds to the 5S rRNA independently of L5 and L18.

Its function is as follows. This is one of the proteins that binds to the 5S RNA in the ribosome where it forms part of the central protuberance. This Rhodococcus jostii (strain RHA1) protein is Large ribosomal subunit protein bL25.